Here is a 201-residue protein sequence, read N- to C-terminus: Pyridoxal 5'-phosphate synthase subunit PdxT (201 aa).

50-52 (GES) contributes to the L-glutamine binding site. Catalysis depends on Cys-82, which acts as the Nucleophile. L-glutamine is bound by residues Arg-111 and 139–140 (IR). Residues His-180 and Glu-182 each act as charge relay system in the active site.

It belongs to the glutaminase PdxT/SNO family. As to quaternary structure, in the presence of PdxS, forms a dodecamer of heterodimers. Only shows activity in the heterodimer.

The catalysed reaction is aldehydo-D-ribose 5-phosphate + D-glyceraldehyde 3-phosphate + L-glutamine = pyridoxal 5'-phosphate + L-glutamate + phosphate + 3 H2O + H(+). It carries out the reaction L-glutamine + H2O = L-glutamate + NH4(+). Its pathway is cofactor biosynthesis; pyridoxal 5'-phosphate biosynthesis. Functionally, catalyzes the hydrolysis of glutamine to glutamate and ammonia as part of the biosynthesis of pyridoxal 5'-phosphate. The resulting ammonia molecule is channeled to the active site of PdxS. This is Pyridoxal 5'-phosphate synthase subunit PdxT from Nocardioides sp. (strain ATCC BAA-499 / JS614).